The primary structure comprises 1360 residues: Ubiquitin carboxyl-terminal hydrolase 19 (1360 aa).

The segment at 1-46 (MSAGASATGPRRGPPGLEEATSKKKQKDRANLESKDGDARRVSLPR) is disordered. Topologically, residues 1-1333 (MSAGASATGP…TTPDEGCLRY (1333 aa)) are cytoplasmic. Over residues 28–46 (DRANLESKDGDARRVSLPR) the composition is skewed to basic and acidic residues. The region spanning 51–140 (KDELLLDWRQ…VPLLTWPSLL (90 aa)) is the CS 1 domain. The disordered stretch occupies residues 163–239 (PIALEPGSEP…APSFLSDSAT (77 aa)). Residues 170–181 (SEPRRAKQEARN) are compositionally biased toward basic and acidic residues. Positions 189–199 (GEVGSGAGPGT) are enriched in gly residues. Ser220 carries the phosphoserine modification. In terms of domain architecture, CS 2 spans 322-424 (LAFVKNDSYE…RQSQRWGGLE (103 aa)). The tract at residues 432–482 (VGGAKVAVPTGPTPLDSTPPGGGPHPLTGQEEARAVEKEKPKARSEDSGLD) is disordered. The segment covering 462 to 478 (EEARAVEKEKPKARSED) has biased composition (basic and acidic residues). One can recognise a USP domain in the interval 539–1256 (TGLVNLGNTC…YAYVLFYRRR (718 aa)). Cys548 serves as the catalytic Nucleophile. Positions 833, 836, 850, 853, 859, 863, 871, and 875 each coordinate Zn(2+). The segment at 833-875 (CAACQRKQQSEEEKLKRCTRCYRVGYCNQFCQKTHWPDHKGLC) adopts an MYND-type zinc-finger fold. The segment at 965-988 (DTGAHRVWPPADRGPVPSTSGLSS) is disordered. His1207 (proton acceptor) is an active-site residue. Basic and acidic residues predominate over residues 1259 to 1274 (PVERPPRASHSEHHPD). The interval 1259–1281 (PVERPPRASHSEHHPDLGPAAEA) is disordered. The helical transmembrane segment at 1334-1354 (FVLGTVAALVALVLNVFYPLV) threads the bilayer. The Lumenal segment spans residues 1355–1360 (SQSRWR).

As to quaternary structure, interacts with RNF123. Interacts with BIRC2/c-IAP1, BIRC3/c-IAP2 and XIAP/BIRC4. Interacts with HIF1A (via N-terminus).

Its subcellular location is the endoplasmic reticulum membrane. The catalysed reaction is Thiol-dependent hydrolysis of ester, thioester, amide, peptide and isopeptide bonds formed by the C-terminal Gly of ubiquitin (a 76-residue protein attached to proteins as an intracellular targeting signal).. Deubiquitinating enzyme that regulates the degradation of various proteins by removing ubiquitin moieties, thereby preventing their proteasomal degradation. Stabilizes RNF123, which promotes CDKN1B degradation and contributes to cell proliferation. Decreases the levels of ubiquitinated proteins during skeletal muscle formation and acts to repress myogenesis. Modulates transcription of major myofibrillar proteins. Also involved in turnover of endoplasmic-reticulum-associated degradation (ERAD) substrates. Mechanistically, deubiquitinates and thereby stabilizes several E3 ligases involved in the ERAD pathway including SYVN1 or MARCHF6. Regulates the stability of other E3 ligases including BIRC2/c-IAP1 and BIRC3/c-IAP2 by preventing their ubiquitination. Required for cells to mount an appropriate response to hypoxia by rescuing HIF1A from degradation in a non-catalytic manner and by mediating the deubiquitination of FUNDC1. Attenuates mitochondrial damage and ferroptosis by targeting and stabilizing NADPH oxidase 4/NOX4. Negatively regulates TNF-alpha- and IL-1beta-triggered NF-kappa-B activation by hydrolyzing 'Lys-27'- and 'Lys-63'-linked polyubiquitin chains from MAP3K7. Modulates also the protein level and aggregation of polyQ-expanded huntingtin/HTT through HSP90AA1. The sequence is that of Ubiquitin carboxyl-terminal hydrolase 19 (Usp19) from Mus musculus (Mouse).